Reading from the N-terminus, the 269-residue chain is Ribonuclease HII (269 aa).

One can recognise an RNase H type-2 domain in the interval 61 to 250 (RLVCGVDEAG…VRKMLSPGLE (190 aa)). Positions 67, 68, and 158 each coordinate a divalent metal cation.

Belongs to the RNase HII family. Requires Mn(2+) as cofactor. It depends on Mg(2+) as a cofactor.

It localises to the cytoplasm. It carries out the reaction Endonucleolytic cleavage to 5'-phosphomonoester.. Its function is as follows. Endonuclease that specifically degrades the RNA of RNA-DNA hybrids. The protein is Ribonuclease HII of Parvibaculum lavamentivorans (strain DS-1 / DSM 13023 / NCIMB 13966).